The following is a 104-amino-acid chain: Small ribosomal subunit protein uS10 (104 aa).

This sequence belongs to the universal ribosomal protein uS10 family. As to quaternary structure, part of the 30S ribosomal subunit.

Functionally, involved in the binding of tRNA to the ribosomes. The sequence is that of Small ribosomal subunit protein uS10 from Buchnera aphidicola subsp. Baizongia pistaciae (strain Bp).